Consider the following 284-residue polypeptide: Ribose-phosphate pyrophosphokinase (284 aa).

ATP is bound by residues 34 to 36 (DNE) and 92 to 93 (RQ). His125 and Asp163 together coordinate Mg(2+). Lys186 is a catalytic residue. D-ribose 5-phosphate is bound by residues Arg188, Asp212, and 216–220 (STGGT).

This sequence belongs to the ribose-phosphate pyrophosphokinase family. Class III (archaeal) subfamily. In terms of assembly, homotetramer. Mg(2+) is required as a cofactor.

It localises to the cytoplasm. It carries out the reaction D-ribose 5-phosphate + ATP = 5-phospho-alpha-D-ribose 1-diphosphate + AMP + H(+). It participates in metabolic intermediate biosynthesis; 5-phospho-alpha-D-ribose 1-diphosphate biosynthesis; 5-phospho-alpha-D-ribose 1-diphosphate from D-ribose 5-phosphate (route I): step 1/1. Its activity is regulated as follows. Activated by inorganic phosphate, with a maximal activity at 190 mM. Above this concentration inorganic phosphate progressively inhibits the kinase. Completely inhibited by ADP, and partially inhibited by alpha,beta-methylene ATP (mATP). Lack of allosteric regulation. Its function is as follows. Involved in the biosynthesis of the central metabolite phospho-alpha-D-ribosyl-1-pyrophosphate (PRPP) via the transfer of pyrophosphoryl group from ATP to 1-hydroxyl of ribose-5-phosphate (Rib-5-P). It can also use dATP as diphosphoryl donor. This Methanocaldococcus jannaschii (strain ATCC 43067 / DSM 2661 / JAL-1 / JCM 10045 / NBRC 100440) (Methanococcus jannaschii) protein is Ribose-phosphate pyrophosphokinase.